We begin with the raw amino-acid sequence, 350 residues long: Anthranilate phosphoribosyltransferase (350 aa).

5-phospho-alpha-D-ribose 1-diphosphate-binding positions include Gly-94, 97–98, Thr-102, 104–107, 122–130, and Ser-134; these read GD, NIST, and KHGNRAVSS. Gly-94 contributes to the anthranilate binding site. Residue Ser-106 participates in Mg(2+) binding. Asn-125 contributes to the anthranilate binding site. Arg-180 provides a ligand contact to anthranilate. Mg(2+)-binding residues include Asp-239 and Glu-240.

Belongs to the anthranilate phosphoribosyltransferase family. As to quaternary structure, homodimer. Requires Mg(2+) as cofactor.

The enzyme catalyses N-(5-phospho-beta-D-ribosyl)anthranilate + diphosphate = 5-phospho-alpha-D-ribose 1-diphosphate + anthranilate. It functions in the pathway amino-acid biosynthesis; L-tryptophan biosynthesis; L-tryptophan from chorismate: step 2/5. Catalyzes the transfer of the phosphoribosyl group of 5-phosphorylribose-1-pyrophosphate (PRPP) to anthranilate to yield N-(5'-phosphoribosyl)-anthranilate (PRA). In Geobacter sulfurreducens (strain ATCC 51573 / DSM 12127 / PCA), this protein is Anthranilate phosphoribosyltransferase.